A 131-amino-acid chain; its full sequence is SPbeta prophage-derived uncharacterized protein YosD (131 aa).

Residues 102 to 131 (EHNNKKAKNNDTQNQRQIKTSWWQRLTKKD) form a disordered region. The segment covering 111–125 (NDTQNQRQIKTSWWQ) has biased composition (polar residues).

This chain is SPbeta prophage-derived uncharacterized protein YosD (yosD), found in Bacillus subtilis (strain 168).